A 347-amino-acid polypeptide reads, in one-letter code: 2-hydroxyacid dehydrogenase A (347 aa).

Residues 157 to 158, aspartate 177, 234 to 236, and aspartate 260 contribute to the NAD(+) site; these read RI and TSR. Arginine 236 is a catalytic residue. Glutamate 265 is a catalytic residue.

It belongs to the D-isomer specific 2-hydroxyacid dehydrogenase family.

It catalyses the reaction a (2R)-2-hydroxycarboxylate + NADP(+) = a 2-oxocarboxylate + NADPH + H(+). Its function is as follows. 2-hydroxyacid dehydrogenase that is capable to reduce pyruvate, hydroxypyruvate and glyoxylate in a NADPH- or NADH-dependent manner. In contrast to 2-HadhD/morA, does not recognize 4-methyl-2-oxopentanoate (MOA) as a substrate. This chain is 2-hydroxyacid dehydrogenase A, found in Aspergillus oryzae (strain ATCC 42149 / RIB 40) (Yellow koji mold).